The following is a 281-amino-acid chain: 39kDa core protein OPG130 (281 aa).

Polar residues predominate over residues 1–22; that stretch reads MDFFNKFSQGLAESSTPKSSIY. Disordered regions lie at residues 1-33, 93-112, and 149-188; these read MDFF…DTKK, LPSS…TSSD, and NKDQ…TVTP. Residues 24–33 are compositionally biased toward basic and acidic residues; the sequence is SEEKDPDTKK. Residues 94–112 are compositionally biased toward polar residues; the sequence is PSSTVPTPKPRQQTNTSSD. Residues 154 to 175 show a composition bias toward low complexity; sequence TTTPPSTQPSQTLPTTTCTQQS.

This sequence belongs to the orthopoxvirus OPG130 family. In terms of assembly, interacts with OPG136 and its cleaved form. Post-translationally, its phosphorylation state is regulated by the OPG054 kinase and the OPG106 phosphatase.

The protein localises to the virion. It localises to the host endoplasmic reticulum-Golgi intermediate compartment membrane. In terms of biological role, component of the virion core. Participates in virion assembly. The protein is 39kDa core protein OPG130 (OPG130) of Vaccinia virus (strain Western Reserve) (VACV).